Reading from the N-terminus, the 449-residue chain is Cyclin-B1-5 (449 aa).

Disordered regions lie at residues 1 to 37 and 98 to 147; these read MATR…AGRP and PARK…GGSA. Low complexity-rich tracts occupy residues 8 to 37 and 136 to 147; these read AAAA…AGRP and SEGAGSSSGGSA.

The protein belongs to the cyclin family. Cyclin AB subfamily.

The protein is Cyclin-B1-5 (CYCB1-5) of Oryza sativa subsp. japonica (Rice).